We begin with the raw amino-acid sequence, 52 residues long: MIEKQLIGRKGDGGFYRLSVSNGKKIKEVININDLSYSPVQKVDILILMRFL.

This is an uncharacterized protein from Rickettsia conorii (strain ATCC VR-613 / Malish 7).